Here is a 330-residue protein sequence, read N- to C-terminus: MTLRIAITPGEPAGIGPDLLLKLAQQTWDAQLVAIADANMLKQRAKHLGLSIKLIEFDQHAAATPAPAGSLYLHQVDVAEPVELGVLNDANGQYVLDTLRIASEKNMDGTFAAVVTGPVHKGIINKAGISFSGHTEYFAQQSNTADVVMMLATQGLRVALVTTHIPLAYVSRAITEDRLIKVASILNHDLQTKFGIEKPRILVCGLNPHAGEDGHLGREEIDTIIPTLEILNNQGMNLIGPLPADTLFQDKYLNEADAVLAMYHDQGLPVLKYKGFGNSVNITLGLPFIRTSVDHGTALDLAGKGTADVGSFELAIREAIKLAQEKAQNQ.

Substrate is bound by residues His134 and Thr135. A divalent metal cation is bound by residues His164, His209, and His264. Substrate-binding residues include Lys272, Asn281, and Arg290.

This sequence belongs to the PdxA family. As to quaternary structure, homodimer. Zn(2+) is required as a cofactor. It depends on Mg(2+) as a cofactor. Requires Co(2+) as cofactor.

The protein resides in the cytoplasm. The enzyme catalyses 4-(phosphooxy)-L-threonine + NAD(+) = 3-amino-2-oxopropyl phosphate + CO2 + NADH. It functions in the pathway cofactor biosynthesis; pyridoxine 5'-phosphate biosynthesis; pyridoxine 5'-phosphate from D-erythrose 4-phosphate: step 4/5. Functionally, catalyzes the NAD(P)-dependent oxidation of 4-(phosphooxy)-L-threonine (HTP) into 2-amino-3-oxo-4-(phosphooxy)butyric acid which spontaneously decarboxylates to form 3-amino-2-oxopropyl phosphate (AHAP). The polypeptide is 4-hydroxythreonine-4-phosphate dehydrogenase (Pseudoalteromonas translucida (strain TAC 125)).